We begin with the raw amino-acid sequence, 380 residues long: Cytochrome b (380 aa).

Helical transmembrane passes span 33-53 (FGSL…FLAM), 77-98 (WLIR…YLHV), 113-133 (WNIG…GYVL), and 178-198 (FFAF…IHLL). His83 and His97 together coordinate heme b. Heme b-binding residues include His182 and His196. His201 provides a ligand contact to a ubiquinone. The next 4 helical transmembrane spans lie at 226–246 (YKDL…ALFS), 288–308 (LGGV…PMLH), 320–340 (PSQI…WIGG), and 347–367 (FVLI…IALP).

This sequence belongs to the cytochrome b family. As to quaternary structure, the cytochrome bc1 complex contains 3 respiratory subunits (MT-CYB, CYC1 and UQCRFS1), 2 core proteins (UQCRC1 and UQCRC2) and probably 6 low-molecular weight proteins. Requires heme b as cofactor.

It is found in the mitochondrion inner membrane. In terms of biological role, component of the ubiquinol-cytochrome c reductase complex (complex III or cytochrome b-c1 complex) that is part of the mitochondrial respiratory chain. The b-c1 complex mediates electron transfer from ubiquinol to cytochrome c. Contributes to the generation of a proton gradient across the mitochondrial membrane that is then used for ATP synthesis. The polypeptide is Cytochrome b (mt-cyb) (Acipenser sinensis (Chinese sturgeon)).